The chain runs to 507 residues: Maturase K (507 aa).

It belongs to the intron maturase 2 family. MatK subfamily.

The protein localises to the plastid. Its subcellular location is the chloroplast. Usually encoded in the trnK tRNA gene intron. Probably assists in splicing its own and other chloroplast group II introns. This Cupaniopsis anacardioides (Carrotwood) protein is Maturase K.